Reading from the N-terminus, the 325-residue chain is Elongation factor P--(R)-beta-lysine ligase (325 aa).

Substrate is bound at residue 76-78 (SPE). Residues 100–102 (RNE) and N109 each bind ATP. Y118 serves as a coordination point for substrate. Residue 244-245 (EL) participates in ATP binding. E251 serves as a coordination point for substrate. G300 is a binding site for ATP.

It belongs to the class-II aminoacyl-tRNA synthetase family. EpmA subfamily. As to quaternary structure, homodimer.

The catalysed reaction is D-beta-lysine + L-lysyl-[protein] + ATP = N(6)-((3R)-3,6-diaminohexanoyl)-L-lysyl-[protein] + AMP + diphosphate + H(+). In terms of biological role, with EpmB is involved in the beta-lysylation step of the post-translational modification of translation elongation factor P (EF-P) on 'Lys-34'. Catalyzes the ATP-dependent activation of (R)-beta-lysine produced by EpmB, forming a lysyl-adenylate, from which the beta-lysyl moiety is then transferred to the epsilon-amino group of EF-P 'Lys-34'. This chain is Elongation factor P--(R)-beta-lysine ligase, found in Salmonella typhi.